An 882-amino-acid polypeptide reads, in one-letter code: Putative HTH-type transcriptional regulator Mb0914c (882 aa).

One can recognise an HTH luxR-type domain in the interval 814-879 (PARGWGSLTP…QLVDEAARRG (66 aa)). Positions 838-857 (NKDIAKRLFVSPRTVQTHLT) form a DNA-binding region, H-T-H motif.

The chain is Putative HTH-type transcriptional regulator Mb0914c from Mycobacterium bovis (strain ATCC BAA-935 / AF2122/97).